The sequence spans 393 residues: Phospho-N-acetylmuramoyl-pentapeptide-transferase (393 aa).

A run of 10 helical transmembrane segments spans residues 29 to 49 (RAVM…PIVI), 75 to 95 (TPTM…LLWF), 101 to 121 (FVWI…VDDW), 138 to 158 (YFWQ…SVSE), 193 to 213 (SISY…VIVG), 226 to 246 (GLAI…AYAT), 263 to 283 (AGEL…FLWF), 290 to 310 (VFMG…IAVI), 315 to 335 (VVLA…MAQV), and 370 to 390 (QVVV…LSSL).

The protein belongs to the glycosyltransferase 4 family. MraY subfamily. It depends on Mg(2+) as a cofactor.

The protein localises to the cell inner membrane. It carries out the reaction UDP-N-acetyl-alpha-D-muramoyl-L-alanyl-gamma-D-glutamyl-meso-2,6-diaminopimeloyl-D-alanyl-D-alanine + di-trans,octa-cis-undecaprenyl phosphate = di-trans,octa-cis-undecaprenyl diphospho-N-acetyl-alpha-D-muramoyl-L-alanyl-D-glutamyl-meso-2,6-diaminopimeloyl-D-alanyl-D-alanine + UMP. Its pathway is cell wall biogenesis; peptidoglycan biosynthesis. Its function is as follows. Catalyzes the initial step of the lipid cycle reactions in the biosynthesis of the cell wall peptidoglycan: transfers peptidoglycan precursor phospho-MurNAc-pentapeptide from UDP-MurNAc-pentapeptide onto the lipid carrier undecaprenyl phosphate, yielding undecaprenyl-pyrophosphoryl-MurNAc-pentapeptide, known as lipid I. This Methylibium petroleiphilum (strain ATCC BAA-1232 / LMG 22953 / PM1) protein is Phospho-N-acetylmuramoyl-pentapeptide-transferase.